We begin with the raw amino-acid sequence, 138 residues long: Basic phospholipase A2 myotoxin I (138 aa).

The first 16 residues, Met-1–Gly-16, serve as a signal peptide directing secretion. Disulfide bonds link Cys-42-Cys-131, Cys-44-Cys-60, Cys-59-Cys-111, Cys-65-Cys-138, Cys-66-Cys-104, Cys-73-Cys-97, and Cys-91-Cys-102. 3 residues coordinate Ca(2+): Tyr-43, Gly-45, and Gly-47. Residue His-63 is part of the active site. Asp-64 lines the Ca(2+) pocket. Residue Asp-105 is part of the active site.

This sequence belongs to the phospholipase A2 family. Group II subfamily. D49 sub-subfamily. In terms of assembly, monomer. Homodimer; non-covalently linked (alternative/compact dimer conformation). Ca(2+) serves as cofactor. As to expression, expressed by the venom gland.

Its subcellular location is the secreted. The catalysed reaction is a 1,2-diacyl-sn-glycero-3-phosphocholine + H2O = a 1-acyl-sn-glycero-3-phosphocholine + a fatty acid + H(+). With respect to regulation, high level of membrane cholesterol content reduces cytolytic activity, whereas low level of membrane cholesterol content increases cytolytic activity. Its function is as follows. Snake venom phospholipase A2 (PLA2) that displays local myotoxic activity. It also displays anticoagulant action in plasma and edema-inducing activities. In addition, it shows cytotoxic activity to a variety of cell types and bactericidal activity to a variety of Gram-negative and Gram-positive bacteria. PLA2 catalyzes the calcium-dependent hydrolysis of the 2-acyl groups in 3-sn-phosphoglycerides. The protein is Basic phospholipase A2 myotoxin I of Bothrops asper (Terciopelo).